Consider the following 612-residue polypeptide: MSFIITVIGAGHAGLEAAFIVSKFNIKVNLLVLDINHLGSCPCNPSIGGPAKGIVTREIDVLGGMQAIAADNNALQYKLLNSSKGPAVQAIRAQIDKIGYKNWFQSQVKLNKNINLIQSEAINLIVRNEKIKGVILKDGSELLSDAVIITTGTYLRSKTYCGNTVKNQGPDQSKNSEKLSTNLINRGFKTIRLKTGTPPRILKTSLDYNQMELEINNNQNLAFSTTNKNFLPLEKQIPCYLVHTNQKIHDLILKNLKKSAMFNGSISAQGPLYCPSIEDKVFKFSQKPRHQIFVEPESLSLDTIYLAGLSTSFTPEIQKEIIQLLPGFQNAEIKKFGYAIEYDAFLSNQLKPTLETKLIENLYFAGQINGTSGYEEAAGQGLMAGINAALKLLKKPPFILQRNEAYIGVMINDLVTKTISDPYRLLTSRAEYRLWLRNDNVQERLIKKSFELGLTDKKTYELFLKKEKKKQELISFLKNTQVGKVKALKFTNKNTAQSLYDFNKRSEINLDKLIKDLPEKYQLDSETLKQIEIEIKYEGYIKKNEKYFKGLDKLSKIKIPHTFDYHKVKNLASEAIFKLSNFKPSNLAIASQIAGVNFNDIIAIKHFLKTYE.

Residue 9-14 (GAGHAG) coordinates FAD. 270–284 (GPLYCPSIEDKVFKF) contacts NAD(+).

Belongs to the MnmG family. As to quaternary structure, homodimer. Heterotetramer of two MnmE and two MnmG subunits. FAD is required as a cofactor.

It is found in the cytoplasm. NAD-binding protein involved in the addition of a carboxymethylaminomethyl (cmnm) group at the wobble position (U34) of certain tRNAs, forming tRNA-cmnm(5)s(2)U34. In Mycoplasma genitalium (strain ATCC 33530 / DSM 19775 / NCTC 10195 / G37) (Mycoplasmoides genitalium), this protein is tRNA uridine 5-carboxymethylaminomethyl modification enzyme MnmG.